Reading from the N-terminus, the 101-residue chain is NAD(P)H-quinone oxidoreductase subunit 4L, chloroplastic (101 aa).

3 helical membrane-spanning segments follow: residues 2–22 (MFEHVLFLSVYLFSIGIYGLI), 32–52 (ICLELILNSINLNLVTFSDLF), and 61–81 (IFAIFVIALAAAEAAIGLSIL).

It belongs to the complex I subunit 4L family. NDH is composed of at least 16 different subunits, 5 of which are encoded in the nucleus.

It localises to the plastid. It is found in the chloroplast thylakoid membrane. It carries out the reaction a plastoquinone + NADH + (n+1) H(+)(in) = a plastoquinol + NAD(+) + n H(+)(out). The enzyme catalyses a plastoquinone + NADPH + (n+1) H(+)(in) = a plastoquinol + NADP(+) + n H(+)(out). Its function is as follows. NDH shuttles electrons from NAD(P)H:plastoquinone, via FMN and iron-sulfur (Fe-S) centers, to quinones in the photosynthetic chain and possibly in a chloroplast respiratory chain. The immediate electron acceptor for the enzyme in this species is believed to be plastoquinone. Couples the redox reaction to proton translocation, and thus conserves the redox energy in a proton gradient. In Oryza nivara (Indian wild rice), this protein is NAD(P)H-quinone oxidoreductase subunit 4L, chloroplastic.